We begin with the raw amino-acid sequence, 20 residues long: VYINKLTPPCGTMYYACEAV.

The protein is Antiviral protein Y3 of Pleurotus citrinopileatus (Golden oyster mushroom).